The following is a 301-amino-acid chain: POU domain, class 6, transcription factor 1 (301 aa).

Repeat copies occupy residues 11–17 and 50–56. The interval 11–56 is 2 X 7 AA repeats of N-A-Q-G-Q-V-I; it reads NAQGQVIGALPWVVNSASVATPAPAQSLQVQAVTPQLLLNAQGQVI. The tract at residues 66–88 is disordered; it reads QPVAVRKPSTPESPAKSEVQPIQ. Residues 139–213 form the POU-specific domain; that stretch reads EDGINLEEIR…VLEKWLNEAE (75 aa). The segment at residues 234-293 is a DNA-binding region (homeobox); the sequence is KRKRRTSFTPQAIEALNAYFEKNPLPTGQEITEIAKELNYDREVVRVWFCNRRQTLKNTS.

The protein belongs to the POU transcription factor family. Class-6 subfamily. As to expression, in the embryo, widely expressed, with highest levels in the developing brain and spinal cord. In the adult, mostly found in the brain, where it is diffusely expressed with the exception of an enrichment in layer IV of the neocortex. Also found in kidney, lung, heart, adrenal, skin, and placenta. Low levels in spleen, muscle, liver, anterior pituitary, testis and ovary.

The protein resides in the nucleus. Its function is as follows. Transcription factor that binds preferentially to a variant of the octamer motif (5'-ATGATAAT-3'). The protein is POU domain, class 6, transcription factor 1 (Pou6f1) of Rattus norvegicus (Rat).